The following is a 575-amino-acid chain: Potassium-transporting ATPase potassium-binding subunit (575 aa).

Helical transmembrane passes span 3–23 (FEGVLQIVATLVLMVAIVPFF), 69–89 (AVLASNAAMFVPVFAVLLLQG), 136–156 (CFQFLMFTSAATGLAVGIAFI), 178–198 (ILMPISIAFAVVLLSQGVPQS), 266–286 (LLEILLLLAVPTSLIYTFGVL), 293–313 (GWVLFGTIFVLFVGLVGVAAL), 340–360 (FGWAQSALFATATTGTMTGAV), 367–387 (LTPLAGLVTLFNLCLQVIWGG), 391–411 (GIAYILVFLIIAVFLTGLMVG), 431–451 (IIFLVHPVIILVPTAIALAIP), 498–518 (VVLLLGRYAPIVALLALAGGL), and 543–563 (AGTILILGALTFFPVFALGPI).

Belongs to the KdpA family. As to quaternary structure, the system is composed of three essential subunits: KdpA, KdpB and KdpC.

Its subcellular location is the cell inner membrane. Its function is as follows. Part of the high-affinity ATP-driven potassium transport (or Kdp) system, which catalyzes the hydrolysis of ATP coupled with the electrogenic transport of potassium into the cytoplasm. This subunit binds the periplasmic potassium ions and delivers the ions to the membrane domain of KdpB through an intramembrane tunnel. This chain is Potassium-transporting ATPase potassium-binding subunit, found in Gloeobacter violaceus (strain ATCC 29082 / PCC 7421).